A 217-amino-acid polypeptide reads, in one-letter code: Large ribosomal subunit protein uL29m (217 aa).

This sequence belongs to the universal ribosomal protein uL29 family. Component of the mitochondrial large ribosomal subunit. Mature mitochondrial ribosomes consist of a small (37S) and a large (54S) subunit. The 37S subunit contains at least 33 different proteins and 1 molecule of RNA (15S). The 54S subunit contains at least 45 different proteins and 1 molecule of RNA (21S).

The protein localises to the mitochondrion. The protein is Large ribosomal subunit protein uL29m (mrpl4) of Neosartorya fischeri (strain ATCC 1020 / DSM 3700 / CBS 544.65 / FGSC A1164 / JCM 1740 / NRRL 181 / WB 181) (Aspergillus fischerianus).